The chain runs to 1134 residues: Sterol regulatory element-binding protein 1 (1134 aa).

The tract at residues Met-1–Gly-60 is transcriptional activation (acidic). Topologically, residues Met-1–Arg-477 are cytoplasmic. Residues Asn-27–Leu-35 carry the 9aaTAD motif. The interval Leu-46–Ser-73 is disordered. Residues Thr-59–Pro-69 show a composition bias toward polar residues. 2 positions are modified to phosphoserine: Ser-96 and Ser-115. Disordered regions lie at residues Leu-130–Ala-149 and Ser-170–Thr-195. Over residues Ser-170–Gln-179 the composition is skewed to polar residues. The tract at residues Gln-227–Cys-487 is interaction with LMNA. Residues Glu-317–Leu-367 form the bHLH domain. Ser-331 and Ser-332 each carry phosphoserine; by SIK1. The segment at Leu-367–Lys-388 is leucine-zipper. At Ser-389 the chain carries Phosphoserine; by AMPK. Ser-395 carries the post-translational modification Phosphoserine; by SIK1. Residues Val-415–His-468 form a disordered region. Low complexity predominate over residues Asp-424–Pro-453. The residue at position 448 (Ser-448) is a Phosphoserine. A helical transmembrane segment spans residues Leu-478–Gly-498. The Lumenal segment spans residues Trp-499–Pro-536. The chain crosses the membrane as a helical span at residues Leu-537–Gly-557. The Cytoplasmic portion of the chain corresponds to Glu-558–Ser-1134. Ser-1047 carries the phosphoserine modification.

It belongs to the SREBP family. In terms of assembly, forms a tight complex with SCAP, the SCAP-SREBP complex, in the endoplasmic reticulum membrane and the Golgi apparatus. Interacts with PAQR3; the interaction anchors the SCAP-SREBP complex to the Golgi apparatus in low cholesterol conditions. As to quaternary structure, efficient DNA binding of the soluble transcription factor fragment requires dimerization with another bHLH protein. Interacts with CEBPA, the interaction produces a transcriptional synergy. Interacts with LMNA. Post-translationally, processed in the Golgi apparatus, releasing the protein from the membrane. At low cholesterol the SCAP-SREBP complex is recruited into COPII vesicles for export from the endoplasmic reticulum. In the Golgi, complex SREBPs are cleaved sequentially by site-1 (MBTPS1, S1P) and site-2 (MBTPS2, S2P) proteases. The first cleavage by site-1 protease occurs within the luminal loop, the second cleavage by site-2 protease occurs within the first transmembrane domain, releasing the transcription factor from the Golgi membrane. In terms of processing, phosphorylated by AMPK, leading to suppress protein processing and nuclear translocation, and repress target gene expression. Phosphorylation at Ser-389 by SIK1 represses activity possibly by inhibiting DNA-binding. SCAP-free SREBF1 is ubiquitinated by the BCR(ARMC5) complex, leading to its degradation. Post-translationally, ubiquitinated; the nuclear form has a rapid turnover and is rapidly ubiquitinated and degraded by the proteasome in the nucleus. As to expression, predominant isoform expressed in most tissues. Predominates in liver, adrenal gland, brain and adipose tissue. Also found in kidney, thymus, testis, muscle, jejunum, and ileum. Expressed only in select tissues, such as intestinal epithelial, heart, macrophage and bone marrow dendritic cells. Also found in kidney, thymus, testis, muscle, jejunum, and ileum.

The protein localises to the endoplasmic reticulum membrane. It is found in the golgi apparatus membrane. Its subcellular location is the cytoplasmic vesicle. It localises to the COPII-coated vesicle membrane. The protein resides in the nucleus. Activation by cleavage is down-regulated upon activation of SIRT3-dependent PRKAA1/AMPK-alpha signaling cascade which leads to inhibition of ATP-consuming lipogenesis to restore cellular energy balance. In terms of biological role, precursor of the transcription factor form (Processed sterol regulatory element-binding protein 1), which is embedded in the endoplasmic reticulum membrane. Low sterol concentrations promote processing of this form, releasing the transcription factor form that translocates into the nucleus and activates transcription of genes involved in cholesterol biosynthesis and lipid homeostasis. Its function is as follows. Key transcription factor that regulates expression of genes involved in cholesterol biosynthesis and lipid homeostasis. Binds to the sterol regulatory element 1 (SRE-1) (5'-ATCACCCCAC-3'). Has dual sequence specificity binding to both an E-box motif (5'-ATCACGTGA-3') and to SRE-1 (5'-ATCACCCCAC-3'). Regulates the promoters of genes involved in cholesterol biosynthesis and the LDL receptor (LDLR) pathway of sterol regulation. Functionally, isoform expressed only in select tissues, which has higher transcriptional activity compared to SREBP-1C. Able to stimulate both lipogenic and cholesterogenic gene expression. Has a role in the nutritional regulation of fatty acids and triglycerides in lipogenic organs such as the liver. Required for innate immune response in macrophages by regulating lipid metabolism. Predominant isoform expressed in most tissues, which has weaker transcriptional activity compared to isoform SREBP-1A. Primarily controls expression of lipogenic gene. Strongly activates global lipid synthesis in rapidly growing cells. The sequence is that of Sterol regulatory element-binding protein 1 from Mus musculus (Mouse).